Consider the following 327-residue polypeptide: Transcription factor bHLH48 (327 aa).

Residues 137–179 (EPAETDSMVENQNQSYSSGKRKEREKKVKSSTKKNKSSVESDK) are disordered. Residues 191 to 241 (QATDNHSLAERARREKINARMKLLQELVPGCDKIQGTALVLDEIINHVQTL) form the bHLH domain.

Homodimer. In terms of tissue distribution, expressed in leaves, stems, and flowers.

It is found in the nucleus. The protein is Transcription factor bHLH48 (BHLH48) of Arabidopsis thaliana (Mouse-ear cress).